Here is a 179-residue protein sequence, read N- to C-terminus: Adenine phosphoribosyltransferase (179 aa).

It belongs to the purine/pyrimidine phosphoribosyltransferase family. Homodimer.

It localises to the cytoplasm. The enzyme catalyses AMP + diphosphate = 5-phospho-alpha-D-ribose 1-diphosphate + adenine. It participates in purine metabolism; AMP biosynthesis via salvage pathway; AMP from adenine: step 1/1. In terms of biological role, catalyzes a salvage reaction resulting in the formation of AMP, that is energically less costly than de novo synthesis. This chain is Adenine phosphoribosyltransferase, found in Bradyrhizobium diazoefficiens (strain JCM 10833 / BCRC 13528 / IAM 13628 / NBRC 14792 / USDA 110).